A 248-amino-acid polypeptide reads, in one-letter code: 2,3-bisphosphoglycerate-dependent phosphoglycerate mutase (248 aa).

Residues 8-15 (RHGESTWN), 21-22 (TG), Arg-60, 87-90 (ERHY), Lys-98, and 114-115 (RR) each bind substrate. His-9 functions as the Tele-phosphohistidine intermediate in the catalytic mechanism. Glu-87 serves as the catalytic Proton donor/acceptor. The segment at 118–137 (DTPPPALEPTDPRASYDDPR) is disordered. Residues 127–137 (TDPRASYDDPR) show a composition bias toward basic and acidic residues. 183-184 (GN) contributes to the substrate binding site.

Belongs to the phosphoglycerate mutase family. BPG-dependent PGAM subfamily. As to quaternary structure, homodimer.

The catalysed reaction is (2R)-2-phosphoglycerate = (2R)-3-phosphoglycerate. Its pathway is carbohydrate degradation; glycolysis; pyruvate from D-glyceraldehyde 3-phosphate: step 3/5. Its function is as follows. Catalyzes the interconversion of 2-phosphoglycerate and 3-phosphoglycerate. The protein is 2,3-bisphosphoglycerate-dependent phosphoglycerate mutase of Cupriavidus necator (strain ATCC 17699 / DSM 428 / KCTC 22496 / NCIMB 10442 / H16 / Stanier 337) (Ralstonia eutropha).